Consider the following 570-residue polypeptide: Sulfite reductase [NADPH] hemoprotein beta-component (570 aa).

Positions 434, 440, 479, and 483 each coordinate [4Fe-4S] cluster. Cysteine 483 contributes to the siroheme binding site.

The protein belongs to the nitrite and sulfite reductase 4Fe-4S domain family. As to quaternary structure, alpha(8)-beta(8). The alpha component is a flavoprotein, the beta component is a hemoprotein. It depends on siroheme as a cofactor. The cofactor is [4Fe-4S] cluster.

It catalyses the reaction hydrogen sulfide + 3 NADP(+) + 3 H2O = sulfite + 3 NADPH + 4 H(+). The protein operates within sulfur metabolism; hydrogen sulfide biosynthesis; hydrogen sulfide from sulfite (NADPH route): step 1/1. Functionally, component of the sulfite reductase complex that catalyzes the 6-electron reduction of sulfite to sulfide. This is one of several activities required for the biosynthesis of L-cysteine from sulfate. This chain is Sulfite reductase [NADPH] hemoprotein beta-component, found in Escherichia coli O127:H6 (strain E2348/69 / EPEC).